Consider the following 237-residue polypeptide: Orotidine 5'-phosphate decarboxylase (237 aa).

Residues aspartate 11, lysine 34, 61–70 (DLKLHDIPNT), threonine 124, arginine 186, glutamine 195, glycine 215, and arginine 216 contribute to the substrate site. Residue lysine 63 is the Proton donor of the active site.

This sequence belongs to the OMP decarboxylase family. Type 1 subfamily. In terms of assembly, homodimer.

It catalyses the reaction orotidine 5'-phosphate + H(+) = UMP + CO2. It functions in the pathway pyrimidine metabolism; UMP biosynthesis via de novo pathway; UMP from orotate: step 2/2. Catalyzes the decarboxylation of orotidine 5'-monophosphate (OMP) to uridine 5'-monophosphate (UMP). The protein is Orotidine 5'-phosphate decarboxylase of Lactococcus lactis subsp. cremoris (strain MG1363).